A 342-amino-acid polypeptide reads, in one-letter code: N-acetyl-gamma-glutamyl-phosphate reductase (342 aa).

Residue C149 is part of the active site.

It belongs to the NAGSA dehydrogenase family. Type 1 subfamily.

It localises to the cytoplasm. The catalysed reaction is N-acetyl-L-glutamate 5-semialdehyde + phosphate + NADP(+) = N-acetyl-L-glutamyl 5-phosphate + NADPH + H(+). It functions in the pathway amino-acid biosynthesis; L-arginine biosynthesis; N(2)-acetyl-L-ornithine from L-glutamate: step 3/4. Catalyzes the NADPH-dependent reduction of N-acetyl-5-glutamyl phosphate to yield N-acetyl-L-glutamate 5-semialdehyde. This is N-acetyl-gamma-glutamyl-phosphate reductase from Cereibacter sphaeroides (strain ATCC 17025 / ATH 2.4.3) (Rhodobacter sphaeroides).